We begin with the raw amino-acid sequence, 185 residues long: MINQIDIKTRERMEACIQTFHNNISNIKTGRASPTLLHNIYIEYFGSKTPLRQVSNIIVEDSHTLKINVFDDSITSLIRKSILNSNLDLNPVLQGKDIIIPIPRLTEERRKQLIKVIRGDAESSRIQIRNIRRDANDKVKRLLKDKIISEDNEHTSQSKIQIMTNEYIKKIDCILEKKEKELMKF.

It belongs to the RRF family.

The protein localises to the cytoplasm. Functionally, responsible for the release of ribosomes from messenger RNA at the termination of protein biosynthesis. May increase the efficiency of translation by recycling ribosomes from one round of translation to another. In Buchnera aphidicola subsp. Acyrthosiphon pisum (strain 5A), this protein is Ribosome-recycling factor.